A 256-amino-acid chain; its full sequence is Protein N-terminal and lysine N-methyltransferase EFM7 (256 aa).

The tract at residues 1–26 (MSDTESLNDALGLFDEPEDFRPEKPK) is disordered. Residues Trp-64, 90–92 (GAA), Asp-112, Trp-145, and Ser-168 each bind S-adenosyl-L-methionine.

Belongs to the class I-like SAM-binding methyltransferase superfamily. EFM7 family.

It localises to the cytoplasm. Functionally, S-adenosyl-L-methionine-dependent protein methyltransferase that trimethylates the N-terminal glycine 'Gly-2' of elongation factor 1-alpha, before also catalyzing the mono- and dimethylation of 'Lys-3'. In Candida glabrata (strain ATCC 2001 / BCRC 20586 / JCM 3761 / NBRC 0622 / NRRL Y-65 / CBS 138) (Yeast), this protein is Protein N-terminal and lysine N-methyltransferase EFM7.